We begin with the raw amino-acid sequence, 171 residues long: Tetratricopeptide repeat protein 9C (171 aa).

TPR repeat units follow at residues 8–41 (AQLY…LRGL), 72–107 (TDCY…QPEN), and 108–141 (AKAL…QPKD).

The protein belongs to the TTC9 family.

This is Tetratricopeptide repeat protein 9C (Ttc9c) from Rattus norvegicus (Rat).